We begin with the raw amino-acid sequence, 78 residues long: uncharacterized protein (78 aa).

The signal sequence occupies residues M1–A27.

This is an uncharacterized protein from Dryophytes versicolor (chameleon treefrog).